Consider the following 340-residue polypeptide: tRNA N6-adenosine threonylcarbamoyltransferase (340 aa).

2 residues coordinate Fe cation: His-111 and His-115. Substrate is bound by residues 134 to 138 (LVSGG), Asp-167, Gly-180, and Asn-272. Asp-300 is a Fe cation binding site.

This sequence belongs to the KAE1 / TsaD family. Fe(2+) serves as cofactor.

The protein localises to the cytoplasm. The enzyme catalyses L-threonylcarbamoyladenylate + adenosine(37) in tRNA = N(6)-L-threonylcarbamoyladenosine(37) in tRNA + AMP + H(+). Its function is as follows. Required for the formation of a threonylcarbamoyl group on adenosine at position 37 (t(6)A37) in tRNAs that read codons beginning with adenine. Is involved in the transfer of the threonylcarbamoyl moiety of threonylcarbamoyl-AMP (TC-AMP) to the N6 group of A37, together with TsaE and TsaB. TsaD likely plays a direct catalytic role in this reaction. This is tRNA N6-adenosine threonylcarbamoyltransferase from Proteus mirabilis (strain HI4320).